The primary structure comprises 322 residues: MITRKTLSLNFLKPVLELEYQIDQLSKMTYKNKSLNIHDLTALKKQLIKIKIEIFQSLTPLQRLHLVRQVDRPTTLDYIGHILDDWIELHGDRGGTDDPALIGGLGKINNRTVVCIGHQRGKDTKDNVLRNFGMASPGGYRKALRLMKHANRFNFPILTFIDTPGAWAGVDAERLGQGEAIAVNLREMFSFNVPIICTIIGEGGSGGALGIGVGDKVLMLEDAVYTVATPEACAAILWKDSKQSLEAAEALKITSYDLKALGIIDDIVEEPLGGSQEDSLLASHILHSKLVTELNYLLSLSSDKLKELRIPKIRRMGTFYEG.

The region spanning 39–296 is the CoA carboxyltransferase C-terminal domain; that stretch reads DLTALKKQLI…HSKLVTELNY (258 aa).

The protein belongs to the AccA family. As to quaternary structure, acetyl-CoA carboxylase is a heterohexamer composed of biotin carboxyl carrier protein (accB), biotin carboxylase (accC) and two subunits each of ACCase subunit alpha (accA) and ACCase subunit beta (accD).

Its subcellular location is the plastid. It localises to the chloroplast. It carries out the reaction N(6)-carboxybiotinyl-L-lysyl-[protein] + acetyl-CoA = N(6)-biotinyl-L-lysyl-[protein] + malonyl-CoA. It participates in lipid metabolism; malonyl-CoA biosynthesis; malonyl-CoA from acetyl-CoA: step 1/1. Functionally, component of the acetyl coenzyme A carboxylase (ACC) complex. First, biotin carboxylase catalyzes the carboxylation of biotin on its carrier protein (BCCP) and then the CO(2) group is transferred by the carboxyltransferase to acetyl-CoA to form malonyl-CoA. This chain is Acetyl-coenzyme A carboxylase carboxyl transferase subunit alpha, found in Antithamnion sp. (Red alga).